Reading from the N-terminus, the 767-residue chain is Photosystem I P700 chlorophyll a apoprotein A1 (767 aa).

8 helical membrane-spanning segments follow: residues 72-95 (IFSA…FHGA), 158-181 (LMAL…FHYH), 197-221 (LNHH…HVSA), 305-323 (IAHH…GHMY), 364-387 (WHAQ…QHMY), 403-429 (IGLF…IAMV), 451-473 (AIIS…LYIH), and 548-566 (FMVH…LILL). Positions 590 and 599 each coordinate [4Fe-4S] cluster. 2 helical membrane-spanning segments follow: residues 606-627 (HVFL…HFSW) and 681-703 (TSAY…MFLF). Residue histidine 692 coordinates chlorophyll a'. Chlorophyll a is bound by residues methionine 700 and tyrosine 708. Tryptophan 709 provides a ligand contact to phylloquinone. A helical membrane pass occupies residues 741-761 (AVGVAHYLLGGIATTWAFFHA).

Belongs to the PsaA/PsaB family. As to quaternary structure, the PsaA/B heterodimer binds the P700 chlorophyll special pair and subsequent electron acceptors. PSI consists of a core antenna complex that captures photons, and an electron transfer chain that converts photonic excitation into a charge separation. The cyanobacterial PSI reaction center is composed of one copy each of PsaA,B,C,D,E,F,I,J,K,L,M and X, and forms trimeric complexes. Requires PSI electron transfer chain: 5 chlorophyll a, 1 chlorophyll a', 2 phylloquinones and 3 4Fe-4S clusters. PSI core antenna: 90 chlorophyll a, 22 carotenoids, 3 phospholipids and 1 galactolipid. P700 is a chlorophyll a/chlorophyll a' dimer, A0 is one or more chlorophyll a, A1 is one or both phylloquinones and FX is a shared 4Fe-4S iron-sulfur center. as cofactor.

It localises to the cellular thylakoid membrane. It catalyses the reaction reduced [plastocyanin] + hnu + oxidized [2Fe-2S]-[ferredoxin] = oxidized [plastocyanin] + reduced [2Fe-2S]-[ferredoxin]. Functionally, psaA and PsaB bind P700, the primary electron donor of photosystem I (PSI), as well as the electron acceptors A0, A1 and FX. PSI is a plastocyanin/cytochrome c6-ferredoxin oxidoreductase, converting photonic excitation into a charge separation, which transfers an electron from the donor P700 chlorophyll pair to the spectroscopically characterized acceptors A0, A1, FX, FA and FB in turn. Oxidized P700 is reduced on the lumenal side of the thylakoid membrane by plastocyanin or cytochrome c6. This is Photosystem I P700 chlorophyll a apoprotein A1 from Parasynechococcus marenigrum (strain WH8102).